Here is a 685-residue protein sequence, read N- to C-terminus: Kinesin-like protein KIP2 (685 aa).

2 disordered regions span residues 11-46 (EHVG…GPAQ) and 63-101 (SRPS…SGAS). Over residues 86–101 (GSPQSPDAPSSASGAS) the composition is skewed to low complexity. One can recognise a Kinesin motor domain in the interval 113 to 446 (NVSVAIRIKP…VRFASRAKNI (334 aa)). 185–192 (GMTGSGKT) contacts ATP. Coiled coils occupy residues 464–486 (IIQN…RRSA) and 520–663 (LEVE…SALS). The tract at residues 485 to 510 (SAAAPSGNGSTSPLDSPGVGGTSLSE) is disordered.

The protein belongs to the TRAFAC class myosin-kinesin ATPase superfamily. Kinesin family.

It localises to the cytoplasm. The protein localises to the cytoskeleton. In terms of biological role, required for assembly of the mitotic spindle. The chain is Kinesin-like protein KIP2 (KIP2) from Eremothecium gossypii (strain ATCC 10895 / CBS 109.51 / FGSC 9923 / NRRL Y-1056) (Yeast).